We begin with the raw amino-acid sequence, 254 residues long: Uracil-DNA glycosylase (254 aa).

The Proton acceptor role is filled by Asp-91.

This sequence belongs to the uracil-DNA glycosylase (UDG) superfamily. UNG family.

The protein resides in the host nucleus. The catalysed reaction is Hydrolyzes single-stranded DNA or mismatched double-stranded DNA and polynucleotides, releasing free uracil.. Functionally, excises uracil residues from the DNA which can arise as a result of misincorporation of dUMP residues by DNA polymerase or deamination of cytosines. Therefore may reduce deleterious uracil incorporation into the viral genome, particularly in terminally differentiated cells which lack DNA repair enzymes. This chain is Uracil-DNA glycosylase (U81), found in Homo sapiens (Human).